Here is a 235-residue protein sequence, read N- to C-terminus: Mediator of RNA polymerase II transcription subunit 29 (235 aa).

Residues 1-14 show a composition bias toward low complexity; the sequence is MMNQMGMMMQQQGV. The tract at residues 1–54 is disordered; sequence MMNQMGMMMQQQGVGVPGGPGGVGGVGMPGPGGVGVAPGMMQSPQMQQAQQQQV. Residues 15-36 are compositionally biased toward gly residues; the sequence is GVPGGPGGVGGVGMPGPGGVGV. Residues 37–54 show a composition bias toward low complexity; it reads APGMMQSPQMQQAQQQQV.

The protein belongs to the Mediator complex subunit 29 family. Component of the Mediator complex.

It localises to the nucleus. In terms of biological role, component of the Mediator complex, a coactivator involved in the regulated transcription of nearly all RNA polymerase II-dependent genes. Mediator functions as a bridge to convey information from gene-specific regulatory proteins to the basal RNA polymerase II transcription machinery. Mediator is recruited to promoters by direct interactions with regulatory proteins and serves as a scaffold for the assembly of a functional preinitiation complex with RNA polymerase II and the general transcription factors. The sequence is that of Mediator of RNA polymerase II transcription subunit 29 (ix) from Anopheles gambiae (African malaria mosquito).